Reading from the N-terminus, the 412-residue chain is Probable tRNA pseudouridine synthase D (412 aa).

The Nucleophile role is filled by aspartate 97. One can recognise a TRUD domain in the interval 167–370; it reads ALPNYYGYQR…YGSYRRARLQ (204 aa).

The protein belongs to the pseudouridine synthase TruD family.

It carries out the reaction uridine(13) in tRNA = pseudouridine(13) in tRNA. Could be responsible for synthesis of pseudouridine from uracil-13 in transfer RNAs. The sequence is that of Probable tRNA pseudouridine synthase D from Pyrobaculum neutrophilum (strain DSM 2338 / JCM 9278 / NBRC 100436 / V24Sta) (Thermoproteus neutrophilus).